We begin with the raw amino-acid sequence, 462 residues long: Argininosuccinate lyase (462 aa).

The protein belongs to the lyase 1 family. Argininosuccinate lyase subfamily.

The protein localises to the cytoplasm. It catalyses the reaction 2-(N(omega)-L-arginino)succinate = fumarate + L-arginine. It participates in amino-acid biosynthesis; L-arginine biosynthesis; L-arginine from L-ornithine and carbamoyl phosphate: step 3/3. This chain is Argininosuccinate lyase, found in Bacillus cereus (strain B4264).